A 339-amino-acid chain; its full sequence is Fructose-1,6-bisphosphatase class 1 (339 aa).

Mg(2+) is bound by residues Glu-91, Asp-113, Leu-115, and Asp-116. Residues 116 to 119 (DGSS), Asn-210, and Lys-276 contribute to the substrate site. Residue Glu-282 coordinates Mg(2+).

It belongs to the FBPase class 1 family. In terms of assembly, homotetramer. Mg(2+) is required as a cofactor.

It is found in the cytoplasm. It catalyses the reaction beta-D-fructose 1,6-bisphosphate + H2O = beta-D-fructose 6-phosphate + phosphate. Its pathway is carbohydrate biosynthesis; gluconeogenesis. The protein is Fructose-1,6-bisphosphatase class 1 of Bordetella bronchiseptica (strain ATCC BAA-588 / NCTC 13252 / RB50) (Alcaligenes bronchisepticus).